The primary structure comprises 280 residues: Probable protein VP2 (280 aa).

Disordered regions lie at residues 46 to 167 (LGAG…FFTS) and 200 to 280 (AQLS…TYSN). Positions 65 to 81 (PEGPGGPPQHAPPNPPP) are enriched in pro residues. Residues 90–100 (RGGGAGGAGDG) are compositionally biased toward gly residues. Over residues 106 to 117 (DAAEEYGPEDLD) the composition is skewed to acidic residues. Residues 227 to 251 (AKTRRRVKKKPLSSKNKHTKKKKRS) show a composition bias toward basic residues. Residues 252–266 (YSSSSPSSKDNTSES) show a composition bias toward low complexity.

Phosphorylated at C-terminal serines.

This is Probable protein VP2 from Homo sapiens (Human).